The primary structure comprises 512 residues: Glycerol kinase (512 aa).

ADP is bound at residue threonine 14. ATP is bound by residues threonine 14, threonine 15, and serine 16. Position 14 (threonine 14) interacts with sn-glycerol 3-phosphate. ADP is bound at residue arginine 18. Positions 83, 84, 135, and 244 each coordinate sn-glycerol 3-phosphate. Residues arginine 83, glutamate 84, tyrosine 135, aspartate 244, and glutamine 245 each contribute to the glycerol site. ADP is bound by residues threonine 266, glycine 309, glycine 410, and asparagine 414. 3 residues coordinate ATP: threonine 266, glycine 309, and glycine 410.

It belongs to the FGGY kinase family.

It catalyses the reaction glycerol + ATP = sn-glycerol 3-phosphate + ADP + H(+). The protein operates within polyol metabolism; glycerol degradation via glycerol kinase pathway; sn-glycerol 3-phosphate from glycerol: step 1/1. Its activity is regulated as follows. Inhibited by fructose 1,6-bisphosphate (FBP). Key enzyme in the regulation of glycerol uptake and metabolism. Catalyzes the phosphorylation of glycerol to yield sn-glycerol 3-phosphate. The chain is Glycerol kinase from Gluconobacter oxydans (strain 621H) (Gluconobacter suboxydans).